Reading from the N-terminus, the 227-residue chain is H-2 class II histocompatibility antigen, A-U alpha chain (227 aa).

Residues 1 to 82 (DHVGSYGIVV…KRSNSTPATN (82 aa)) form an alpha-1 region. Residues 1 to 189 (DHVGSYGIVV…IPAPMSELTE (189 aa)) are Extracellular-facing. Positions 83–176 (EAPQATVFPK…GLEEPVLKHW (94 aa)) are alpha-2. The 93-residue stretch at 85 to 177 (PQATVFPKSP…LEEPVLKHWE (93 aa)) folds into the Ig-like C1-type domain. A disulfide bridge connects residues cysteine 105 and cysteine 161. The N-linked (GlcNAc...) asparagine glycan is linked to asparagine 116. The segment at 177-189 (EPEIPAPMSELTE) is connecting peptide. The helical transmembrane segment at 190-215 (TVVCALGLSVGLVGIVVGTIFIIQGL) threads the bilayer. Over 216–227 (RSGGTSRHPGPL) the chain is Cytoplasmic.

This sequence belongs to the MHC class II family.

It localises to the membrane. The chain is H-2 class II histocompatibility antigen, A-U alpha chain (H2-Aa) from Mus musculus (Mouse).